A 162-amino-acid polypeptide reads, in one-letter code: Protein-export protein SecB (162 aa).

This sequence belongs to the SecB family. Homotetramer, a dimer of dimers. One homotetramer interacts with 1 SecA dimer.

It localises to the cytoplasm. Functionally, one of the proteins required for the normal export of preproteins out of the cell cytoplasm. It is a molecular chaperone that binds to a subset of precursor proteins, maintaining them in a translocation-competent state. It also specifically binds to its receptor SecA. The protein is Protein-export protein SecB of Hamiltonella defensa subsp. Acyrthosiphon pisum (strain 5AT).